Reading from the N-terminus, the 116-residue chain is Large ribosomal subunit protein uL22 (116 aa).

The protein belongs to the universal ribosomal protein uL22 family. Part of the 50S ribosomal subunit.

In terms of biological role, this protein binds specifically to 23S rRNA; its binding is stimulated by other ribosomal proteins, e.g. L4, L17, and L20. It is important during the early stages of 50S assembly. It makes multiple contacts with different domains of the 23S rRNA in the assembled 50S subunit and ribosome. Its function is as follows. The globular domain of the protein is located near the polypeptide exit tunnel on the outside of the subunit, while an extended beta-hairpin is found that lines the wall of the exit tunnel in the center of the 70S ribosome. This Orientia tsutsugamushi (strain Boryong) (Rickettsia tsutsugamushi) protein is Large ribosomal subunit protein uL22.